A 73-amino-acid chain; its full sequence is Translation initiation factor IF-1 3 (73 aa).

Residues 1-72 enclose the S1-like domain; it reads MAKEELVEFG…TKGRINYRHK (72 aa).

The protein belongs to the IF-1 family. In terms of assembly, component of the 30S ribosomal translation pre-initiation complex which assembles on the 30S ribosome in the order IF-2 and IF-3, IF-1 and N-formylmethionyl-tRNA(fMet); mRNA recruitment can occur at any time during PIC assembly.

The protein resides in the cytoplasm. In terms of biological role, one of the essential components for the initiation of protein synthesis. Stabilizes the binding of IF-2 and IF-3 on the 30S subunit to which N-formylmethionyl-tRNA(fMet) subsequently binds. Helps modulate mRNA selection, yielding the 30S pre-initiation complex (PIC). Upon addition of the 50S ribosomal subunit IF-1, IF-2 and IF-3 are released leaving the mature 70S translation initiation complex. This Cupriavidus pinatubonensis (strain JMP 134 / LMG 1197) (Cupriavidus necator (strain JMP 134)) protein is Translation initiation factor IF-1 3.